A 2242-amino-acid chain; its full sequence is DEP domain-containing protein DDB_G0279099 (2242 aa).

Disordered stretches follow at residues 388–465 (SQNT…SNNS), 576–644 (DSNA…YSRV), 701–730 (PILR…FDQK), 871–965 (DPTT…TKKS), 1077–1194 (QLQL…AFNS), 1287–1336 (GSQQ…MNGS), 1384–1414 (SELL…ALPE), 1446–1471 (AQSS…NTSG), and 1502–1521 (SNNN…NSLN). Residues 392-440 (IQNNNNNNNNNNNNNNNNNNNNNNNNNNNNNNNNNNNNNSNNNKNNQNN) are a coiled coil. The segment covering 581–614 (GGNNNNNYNNNNGNGNGHNHNNHNNNNNNNNNND) has biased composition (low complexity). Over residues 622–631 (EPSDFSDTED) the composition is skewed to acidic residues. Polar residues-rich tracts occupy residues 632–642 (NSSTTPNSQYS) and 719–729 (HPISPSNSFDQ). The span at 872–955 (PTTTTTTGGT…PNSSNTVPNS (84 aa)) shows a compositional bias: low complexity. Residues 1066–1101 (IPTVENNQHQQQLQLEQQEKEKEKARLAALEKKKPF) adopt a coiled-coil conformation. Positions 1082–1106 (QQEKEKEKARLAALEKKKPFPREDS) are enriched in basic and acidic residues. Composition is skewed to low complexity over residues 1108-1182 (STLI…ATTA) and 1287-1299 (GSQQ…GSQS). Polar residues predominate over residues 1300-1311 (APTSPLTPHKNI). Composition is skewed to low complexity over residues 1312 to 1336 (NTNN…MNGS), 1384 to 1410 (SELL…GENN), and 1446 to 1470 (AQSS…TNTS). The 74-residue stretch at 1556 to 1629 (IGIKMTERKY…DGQFYYRLKE (74 aa)) folds into the DEP domain. Low complexity predominate over residues 1645-1668 (TNNNFNNNNTNSNNNQQQQQQQQS). 4 disordered regions span residues 1645–1763 (TNNN…SMSN), 1803–1910 (DEAN…QQQQ), 2122–2145 (NYNN…NLLK), and 2165–2218 (NSDT…KNEM). The segment covering 1669 to 1702 (IPSVTSSAVNSPNKDSNTPDHSPISSPKQIGNKL) has biased composition (polar residues). Low complexity-rich tracts occupy residues 1703–1760 (SSSS…IQSS) and 1807–1848 (GDNN…SSNS). The stretch at 1791–1821 (LTNKEKDKEKEIDEANGDNNNNNNNNNNNNN) forms a coiled coil. 2 stretches are compositionally biased toward polar residues: residues 1849-1871 (GQGS…TNPL) and 1879-1889 (YGSSVQNSNQH). 2 stretches are compositionally biased toward low complexity: residues 1890 to 1910 (QQQQ…QQQQ) and 2122 to 2133 (NYNNNNNNNNNN). 2 stretches are compositionally biased toward basic and acidic residues: residues 2166–2181 (SDTE…DNNH) and 2192–2218 (DTDH…KNEM).

The protein in the N-terminal section; belongs to the IML1 family.

The sequence is that of DEP domain-containing protein DDB_G0279099 from Dictyostelium discoideum (Social amoeba).